The chain runs to 643 residues: Threonine--tRNA ligase (643 aa).

A TGS domain is found at M1–T61. A catalytic region spans residues D243 to P534. Residues C334, H385, and H511 each contribute to the Zn(2+) site.

The protein belongs to the class-II aminoacyl-tRNA synthetase family. In terms of assembly, homodimer. Zn(2+) serves as cofactor.

The protein localises to the cytoplasm. It carries out the reaction tRNA(Thr) + L-threonine + ATP = L-threonyl-tRNA(Thr) + AMP + diphosphate + H(+). In terms of biological role, catalyzes the attachment of threonine to tRNA(Thr) in a two-step reaction: L-threonine is first activated by ATP to form Thr-AMP and then transferred to the acceptor end of tRNA(Thr). Also edits incorrectly charged L-seryl-tRNA(Thr). The chain is Threonine--tRNA ligase from Glaesserella parasuis serovar 5 (strain SH0165) (Haemophilus parasuis).